The sequence spans 1293 residues: Phosphoribosylformylglycinamidine synthase (1293 aa).

ATP is bound by residues 305-316 and Ala-676; that span reads GAATGSGGEIRD. The disordered stretch occupies residues 305-327; the sequence is GAATGSGGEIRDEGATGRGSKPK. 4 residues coordinate Mg(2+): Asp-677, Glu-716, Asn-720, and Asp-884. ATP is bound at residue Ser-886. One can recognise a Glutamine amidotransferase type-1 domain in the interval 1040–1293; sequence MAILREQGVN…MFRNARVNLG (254 aa). Cys-1133 acts as the Nucleophile in catalysis. Catalysis depends on residues His-1258 and Glu-1260.

This sequence in the N-terminal section; belongs to the FGAMS family. Monomer.

Its subcellular location is the cytoplasm. It catalyses the reaction N(2)-formyl-N(1)-(5-phospho-beta-D-ribosyl)glycinamide + L-glutamine + ATP + H2O = 2-formamido-N(1)-(5-O-phospho-beta-D-ribosyl)acetamidine + L-glutamate + ADP + phosphate + H(+). The protein operates within purine metabolism; IMP biosynthesis via de novo pathway; 5-amino-1-(5-phospho-D-ribosyl)imidazole from N(2)-formyl-N(1)-(5-phospho-D-ribosyl)glycinamide: step 1/2. Phosphoribosylformylglycinamidine synthase involved in the purines biosynthetic pathway. Catalyzes the ATP-dependent conversion of formylglycinamide ribonucleotide (FGAR) and glutamine to yield formylglycinamidine ribonucleotide (FGAM) and glutamate. This Shewanella oneidensis (strain ATCC 700550 / JCM 31522 / CIP 106686 / LMG 19005 / NCIMB 14063 / MR-1) protein is Phosphoribosylformylglycinamidine synthase.